The primary structure comprises 152 residues: UPF0178 protein KPN78578_03210 (152 aa).

It belongs to the UPF0178 family.

This is UPF0178 protein KPN78578_03210 from Klebsiella pneumoniae subsp. pneumoniae (strain ATCC 700721 / MGH 78578).